The sequence spans 511 residues: MEDIKDSKVKRFCSKNILIILGFSSVLAVIALIAVGLTHNKPLPENVKYGIVLDAGSSHTNLYIYKWPAEKENDTGVVQLLEECQVKGPGISKYAQKTDEIAAYLAECMKMSTERIPASKQHQTPVYLGATAGMRLLRMESKQSADEVLAAVSRSLKSYPFDFQGAKIITGQEEGAYGWITINYLLGRFTQEQSWLNFISDSQKQATFGALDLGGSSTQVTFVPLNQTLEAPETSLQFRLYGTDYTVYTHSFLCYGKDQALWQKLAQDIQVSSGGILKDPCFYPGYKKVVNVSELYGTPCTKRFEKKLPFNQFQVQGTGDYEQCHQSILKFFNNSHCPYSQCAFNGVFLPPLQGSFGAFSAFYFVMDFFKKMANDSVSSQEKMTEITKNFCSKPWEEVKASYPTVKEKYLSEYCFSGTYILSLLLQGYNFTGTSWDQIHFMGKIKDSNAGWTLGYMLNLTNMIPAEQPLSPPLPHSTYISLMVLFSLVLVAMVITGLFIFSKPSYFWKEAV.

The Cytoplasmic portion of the chain corresponds to 1–16 (MEDIKDSKVKRFCSKN). A helical membrane pass occupies residues 17–37 (ILIILGFSSVLAVIALIAVGL). The Extracellular portion of the chain corresponds to 38 to 478 (THNKPLPENV…LSPPLPHSTY (441 aa)). Positions 46–171 (NVKYGIVLDA…DFQGAKIITG (126 aa)) are N-terminal lobe. The N-linked (GlcNAc...) asparagine glycan is linked to N73. The cysteines at positions 84 and 108 are disulfide-linked. E174 acts as the Proton acceptor in catalysis. Residues 205 to 441 (QATFGALDLG…GTSWDQIHFM (237 aa)) are C-terminal lobe. N-linked (GlcNAc...) asparagine glycans are attached at residues N226, N291, and N333. 2 disulfide bridges follow: C254/C300 and C281/C324. An intrachain disulfide couples C337 to C342. Residue N374 is glycosylated (N-linked (GlcNAc...) asparagine). C391 and C414 are joined by a disulfide. N-linked (GlcNAc...) asparagine glycans are attached at residues N429 and N458. The helical transmembrane segment at 479–499 (ISLMVLFSLVLVAMVITGLFI) threads the bilayer. The Cytoplasmic portion of the chain corresponds to 500-511 (FSKPSYFWKEAV).

It belongs to the GDA1/CD39 NTPase family. In terms of assembly, homodimer; disulfide-linked. Ca(2+) serves as cofactor. Requires Mg(2+) as cofactor. Post-translationally, N-glycosylated. In terms of processing, the N-terminus is blocked. Palmitoylated on Cys-13; which is required for caveola targeting. Expressed in primary neurons and astrocytes, kidney, liver, muscle, thymus, lung and spleen.

It is found in the membrane. It localises to the caveola. It carries out the reaction a ribonucleoside 5'-triphosphate + 2 H2O = a ribonucleoside 5'-phosphate + 2 phosphate + 2 H(+). The enzyme catalyses a ribonucleoside 5'-triphosphate + H2O = a ribonucleoside 5'-diphosphate + phosphate + H(+). The catalysed reaction is a ribonucleoside 5'-diphosphate + H2O = a ribonucleoside 5'-phosphate + phosphate + H(+). It catalyses the reaction ATP + 2 H2O = AMP + 2 phosphate + 2 H(+). It carries out the reaction ATP + H2O = ADP + phosphate + H(+). The enzyme catalyses ADP + H2O = AMP + phosphate + H(+). The catalysed reaction is CTP + 2 H2O = CMP + 2 phosphate + 2 H(+). It catalyses the reaction CTP + H2O = CDP + phosphate + H(+). It carries out the reaction CDP + H2O = CMP + phosphate + H(+). The enzyme catalyses GTP + 2 H2O = GMP + 2 phosphate + 2 H(+). The catalysed reaction is GTP + H2O = GDP + phosphate + H(+). It catalyses the reaction GDP + H2O = GMP + phosphate + H(+). It carries out the reaction ITP + 2 H2O = IMP + 2 phosphate + 2 H(+). The enzyme catalyses ITP + H2O = IDP + phosphate + H(+). The catalysed reaction is IDP + H2O = IMP + phosphate + H(+). It catalyses the reaction UTP + 2 H2O = UMP + 2 phosphate + 2 H(+). It carries out the reaction UTP + H2O = UDP + phosphate + H(+). The enzyme catalyses UDP + H2O = UMP + phosphate + H(+). In terms of biological role, catalyzes the hydrolysis of both di- and triphosphate nucleotides (NDPs and NTPs) and hydrolyze NTPs to nucleotide monophosphates (NMPs) in two distinct successive phosphate-releasing steps, with NDPs as intermediates and participates in the regulation of extracellular levels of nucleotides. By hydrolyzing proinflammatory ATP and platelet-activating ADP to AMP, it blocks platelet aggregation and supports blood flow. The chain is Ectonucleoside triphosphate diphosphohydrolase 1 from Rattus norvegicus (Rat).